The chain runs to 258 residues: Aspartate/glutamate leucyltransferase (258 aa).

This sequence belongs to the R-transferase family. Bpt subfamily.

The protein localises to the cytoplasm. The enzyme catalyses N-terminal L-glutamyl-[protein] + L-leucyl-tRNA(Leu) = N-terminal L-leucyl-L-glutamyl-[protein] + tRNA(Leu) + H(+). It carries out the reaction N-terminal L-aspartyl-[protein] + L-leucyl-tRNA(Leu) = N-terminal L-leucyl-L-aspartyl-[protein] + tRNA(Leu) + H(+). Functionally, functions in the N-end rule pathway of protein degradation where it conjugates Leu from its aminoacyl-tRNA to the N-termini of proteins containing an N-terminal aspartate or glutamate. This chain is Aspartate/glutamate leucyltransferase, found in Bradyrhizobium sp. (strain BTAi1 / ATCC BAA-1182).